The chain runs to 900 residues: Isoleucine--tRNA ligase (900 aa).

The 'HIGH' region motif lies at 58-68 (PYANGNIHIGH). Residue glutamate 552 coordinates L-isoleucyl-5'-AMP. A 'KMSKS' region motif is present at residues 593–597 (KMSKS). Lysine 596 contacts ATP.

Belongs to the class-I aminoacyl-tRNA synthetase family. IleS type 1 subfamily. As to quaternary structure, monomer.

It is found in the cytoplasm. The catalysed reaction is tRNA(Ile) + L-isoleucine + ATP = L-isoleucyl-tRNA(Ile) + AMP + diphosphate. Functionally, catalyzes the attachment of isoleucine to tRNA(Ile). As IleRS can inadvertently accommodate and process structurally similar amino acids such as valine, to avoid such errors it has two additional distinct tRNA(Ile)-dependent editing activities. One activity is designated as 'pretransfer' editing and involves the hydrolysis of activated Val-AMP. The other activity is designated 'posttransfer' editing and involves deacylation of mischarged Val-tRNA(Ile). The chain is Isoleucine--tRNA ligase from Ureaplasma parvum serovar 3 (strain ATCC 700970).